A 1143-amino-acid chain; its full sequence is uncharacterized protein (1143 aa).

Residues 1–20 (MKLLLLALILVLSNINLISG) form the signal peptide. The Extracellular portion of the chain corresponds to 21-1121 (NGLVWPHPRL…PAAGGEDSSA (1101 aa)). Positions 177-203 (NSGGSWSSGGSGNSGGGWSSGGSGNSG) are enriched in gly residues. The disordered stretch occupies residues 177-1120 (NSGGSWSSGG…EPAAGGEDSS (944 aa)). Over residues 222–236 (SSGGWTSGSHSSGSW) the composition is skewed to low complexity. The span at 237–283 (SSGGGSGSSSGGQSSGSWSSGGGSSSGGHSSGSWSSGGGSSAGGGSS) shows a compositional bias: gly residues. Low complexity predominate over residues 284-296 (SGSHSSGSWSSGG). The segment covering 297–330 (SSSGGQSSGSWSSGGGSSSGGQSSGSWSSGGGSS) has biased composition (gly residues). A compositionally biased stretch (low complexity) spans 331 to 368 (SGSHSSGSWSSGGSSSGSHSSGSWSSGGSSSSSGNSGW). Gly residues predominate over residues 374–392 (GNTGGNTGGNTGGNTGGQS). Residues 393 to 403 (SGNSGWMTASG) show a composition bias toward low complexity. Composition is skewed to gly residues over residues 404–418 (GNTGGNTGGNTGGQS) and 430–444 (GNTGGNTGGNTGGQS). 2 stretches are compositionally biased toward low complexity: residues 445–498 (SGSS…TSSG) and 506–541 (GSSSSGGNSGWLTSSGGNSGGSSSSGSNSGASSSGD). Gly residues-rich tracts occupy residues 555–573 (GNTGGNSGAATGGNSGGNS), 580–596 (GNSGGASSSGGNTGGNS), 604–622 (GNTGGNSGAATGGNSGGNS), 629–783 (GNSG…GGNS), 790–843 (GNSG…GGAS), and 851–905 (GNSG…GGNS). Over residues 906–1059 (GAATGANSGA…GGNGASGAAN (154 aa)) the composition is skewed to low complexity. The segment covering 1062-1078 (SIVTPNDQNVSPLSNSD) has biased composition (polar residues). The segment covering 1094–1114 (PTSRAPTVTPTPTSSAEEPAA) has biased composition (low complexity). The helical transmembrane segment at 1122–1142 (ISKYSIQSFGIFVLSMIIYLV) threads the bilayer. A topological domain (cytoplasmic) is located at residue I1143.

It is found in the membrane. This is an uncharacterized protein from Dictyostelium discoideum (Social amoeba).